A 370-amino-acid polypeptide reads, in one-letter code: Popeye domain-containing 2 (370 aa).

A run of 2 helical transmembrane segments spans residues 51 to 71 and 78 to 98; these read ALYIFSFLAPAFLCLALWGWL and VFIWNLLLMLQCLAQVCHLIF. The segment at 275–349 is disordered; sequence PSPPGSEGGS…SGEDSTSLIL (75 aa). The segment covering 283–294 has biased composition (low complexity); it reads GSASSPPRGSLG. Polar residues-rich tracts occupy residues 307–319 and 330–347; these read NPGSGTRNPQPDQ and QHWSSDTEMPSGEDSTSL.

The protein belongs to the popeye family. In terms of tissue distribution, expressed in the heart and, slightly, in skeletal muscle.

Its subcellular location is the membrane. It localises to the cell membrane. The protein resides in the sarcolemma. Its function is as follows. Important for striated muscle differentiation and cardiac morphogenesis. Is also required for cardiac conduction system development, plays a regulatory function in heart rate dynamics mediated, at least in part, through cAMP-binding. The protein is Popeye domain-containing 2 of Danio rerio (Zebrafish).